The chain runs to 631 residues: Phosphomethylpyrimidine synthase (631 aa).

Residues Asn-239, Met-268, Tyr-297, His-333, 353–355, 394–397, and Glu-433 contribute to the substrate site; these read SRG and DGLR. His-437 contributes to the Zn(2+) binding site. Substrate is bound at residue Tyr-460. His-501 contacts Zn(2+). [4Fe-4S] cluster contacts are provided by Cys-581, Cys-584, and Cys-589.

Belongs to the ThiC family. As to quaternary structure, homodimer. Requires [4Fe-4S] cluster as cofactor.

It catalyses the reaction 5-amino-1-(5-phospho-beta-D-ribosyl)imidazole + S-adenosyl-L-methionine = 4-amino-2-methyl-5-(phosphooxymethyl)pyrimidine + CO + 5'-deoxyadenosine + formate + L-methionine + 3 H(+). It functions in the pathway cofactor biosynthesis; thiamine diphosphate biosynthesis. Functionally, catalyzes the synthesis of the hydroxymethylpyrimidine phosphate (HMP-P) moiety of thiamine from aminoimidazole ribotide (AIR) in a radical S-adenosyl-L-methionine (SAM)-dependent reaction. This Shigella boydii serotype 4 (strain Sb227) protein is Phosphomethylpyrimidine synthase.